The chain runs to 226 residues: Phosphoribosylformylglycinamidine synthase subunit PurQ (226 aa).

A Glutamine amidotransferase type-1 domain is found at 2–226; the sequence is KIAVVVFPGS…LENGRIKVEA (225 aa). Residue Cys-86 is the Nucleophile of the active site. Residues His-195 and Glu-197 contribute to the active site.

As to quaternary structure, part of the FGAM synthase complex composed of 1 PurL, 1 PurQ and 2 PurS subunits.

It is found in the cytoplasm. The enzyme catalyses N(2)-formyl-N(1)-(5-phospho-beta-D-ribosyl)glycinamide + L-glutamine + ATP + H2O = 2-formamido-N(1)-(5-O-phospho-beta-D-ribosyl)acetamidine + L-glutamate + ADP + phosphate + H(+). The catalysed reaction is L-glutamine + H2O = L-glutamate + NH4(+). It participates in purine metabolism; IMP biosynthesis via de novo pathway; 5-amino-1-(5-phospho-D-ribosyl)imidazole from N(2)-formyl-N(1)-(5-phospho-D-ribosyl)glycinamide: step 1/2. Part of the phosphoribosylformylglycinamidine synthase complex involved in the purines biosynthetic pathway. Catalyzes the ATP-dependent conversion of formylglycinamide ribonucleotide (FGAR) and glutamine to yield formylglycinamidine ribonucleotide (FGAM) and glutamate. The FGAM synthase complex is composed of three subunits. PurQ produces an ammonia molecule by converting glutamine to glutamate. PurL transfers the ammonia molecule to FGAR to form FGAM in an ATP-dependent manner. PurS interacts with PurQ and PurL and is thought to assist in the transfer of the ammonia molecule from PurQ to PurL. The polypeptide is Phosphoribosylformylglycinamidine synthase subunit PurQ (Limosilactobacillus reuteri (strain DSM 20016) (Lactobacillus reuteri)).